The chain runs to 272 residues: 5'-nucleotidase SurE (272 aa).

Residues Asp28, Asp29, Ser59, and Asn115 each coordinate a divalent metal cation.

It belongs to the SurE nucleotidase family. A divalent metal cation is required as a cofactor.

Its subcellular location is the cytoplasm. It catalyses the reaction a ribonucleoside 5'-phosphate + H2O = a ribonucleoside + phosphate. In terms of biological role, nucleotidase that shows phosphatase activity on nucleoside 5'-monophosphates. The polypeptide is 5'-nucleotidase SurE (Chlorobium chlorochromatii (strain CaD3)).